Here is a 166-residue protein sequence, read N- to C-terminus: MSKPLCSTGLRWLWLVVVVLIIDLGSKYLILQNFALGDTVGLFPSLNLHYARNYGAAFSFLADSGGWQRWFFAGIAIGICVILLVMMYRSKATQKLNNIAYALIIGGALGNLFDRLWHGFVVDMIDFYVGDWHFATFNLADTAICIGAALIVLEGFLPKPTAKEQA.

The next 3 membrane-spanning stretches (helical) occupy residues 12 to 32 (WLWLVVVVLIIDLGSKYLILQ), 70 to 90 (WFFAGIAIGICVILLVMMYRS), and 102 to 122 (ALIIGGALGNLFDRLWHGFVV). Residues Asp123 and Asp141 contribute to the active site. A helical membrane pass occupies residues 137-157 (FNLADTAICIGAALIVLEGFL).

It belongs to the peptidase A8 family.

The protein localises to the cell inner membrane. It catalyses the reaction Release of signal peptides from bacterial membrane prolipoproteins. Hydrolyzes -Xaa-Yaa-Zaa-|-(S,diacylglyceryl)Cys-, in which Xaa is hydrophobic (preferably Leu), and Yaa (Ala or Ser) and Zaa (Gly or Ala) have small, neutral side chains.. It participates in protein modification; lipoprotein biosynthesis (signal peptide cleavage). This protein specifically catalyzes the removal of signal peptides from prolipoproteins. The protein is Lipoprotein signal peptidase of Salmonella paratyphi A (strain ATCC 9150 / SARB42).